The primary structure comprises 24 residues: Brevinin-1Pc (24 aa).

Cys-18 and Cys-24 are oxidised to a cystine.

Expressed by the skin glands.

The protein localises to the secreted. Antibacterial activity against Gram-positive bacterium S.aureus and Gram-negative bacterium E.coli. Has activity against C.albicans. The protein is Brevinin-1Pc of Lithobates pipiens (Northern leopard frog).